Reading from the N-terminus, the 166-residue chain is Regulatory protein RecX (166 aa).

This sequence belongs to the RecX family.

It is found in the cytoplasm. Functionally, modulates RecA activity. In Shigella sonnei (strain Ss046), this protein is Regulatory protein RecX.